Reading from the N-terminus, the 341-residue chain is NADH-quinone oxidoreductase subunit H (341 aa).

8 helical membrane passes run 6–26 (LIVS…LMAY), 76–96 (LVFL…AAVI), 118–138 (VAVL…ILGG), 157–177 (VISY…LSGS), 198–218 (LPNW…IAAV), 252–272 (FLAE…LFLG), 278–298 (FADG…FYVW), and 313–333 (GLAW…TGLV).

It belongs to the complex I subunit 1 family. NDH-1 is composed of 14 different subunits. Subunits NuoA, H, J, K, L, M, N constitute the membrane sector of the complex.

The protein resides in the cell membrane. It carries out the reaction a quinone + NADH + 5 H(+)(in) = a quinol + NAD(+) + 4 H(+)(out). NDH-1 shuttles electrons from NADH, via FMN and iron-sulfur (Fe-S) centers, to quinones in the respiratory chain. The immediate electron acceptor for the enzyme in this species is believed to be ubiquinone. Couples the redox reaction to proton translocation (for every two electrons transferred, four hydrogen ions are translocated across the cytoplasmic membrane), and thus conserves the redox energy in a proton gradient. This subunit may bind ubiquinone. This is NADH-quinone oxidoreductase subunit H from Thermomicrobium roseum (strain ATCC 27502 / DSM 5159 / P-2).